A 1132-amino-acid polypeptide reads, in one-letter code: Mediator of RNA polymerase II transcription subunit 5 (1132 aa).

Positions 998-1023 (KGDVDIKGEDLHEKNDSAEVRQETQP) are enriched in basic and acidic residues. Residues 998-1070 (KGDVDIKGED…RTNNVPMIKA (73 aa)) form a disordered region. Residues 1047-1057 (YEEEEENEDND) show a composition bias toward acidic residues.

Belongs to the Mediator complex subunit 5 family. Component of the Mediator complex, which is composed of at least 21 subunits that form three structurally distinct submodules. The Mediator head module contains MED6, MED8, MED11, SRB4/MED17, SRB5/MED18, ROX3/MED19, SRB2/MED20 and SRB6/MED22, the middle module contains MED1, MED4, NUT1/MED5, MED7, CSE2/MED9, NUT2/MED10, SRB7/MED21 and SOH1/MED31, and the tail module contains MED2, PGD1/MED3, RGR1/MED14, GAL11/MED15 and SIN4/MED16. The head and the middle modules interact directly with RNA polymerase II, whereas the elongated tail module interacts with gene-specific regulatory proteins.

It localises to the nucleus. In terms of biological role, component of the Mediator complex, a coactivator involved in the regulated transcription of nearly all RNA polymerase II-dependent genes. Mediator functions as a bridge to convey information from gene-specific regulatory proteins to the basal RNA polymerase II transcription machinery. The Mediator complex, having a compact conformation in its free form, is recruited to promoters by direct interactions with regulatory proteins and serves for the assembly of a functional preinitiation complex with RNA polymerase II and the general transcription factors. The Mediator complex unfolds to an extended conformation and partially surrounds RNA polymerase II, specifically interacting with the unphosphorylated form of the C-terminal domain (CTD) of RNA polymerase II. The Mediator complex dissociates from the RNA polymerase II holoenzyme and stays at the promoter when transcriptional elongation begins. This is Mediator of RNA polymerase II transcription subunit 5 (NUT1) from Saccharomyces cerevisiae (strain ATCC 204508 / S288c) (Baker's yeast).